A 208-amino-acid polypeptide reads, in one-letter code: Outer-membrane lipoprotein carrier protein (208 aa).

The N-terminal stretch at 1-22 is a signal peptide; that stretch reads MKNLLCAVMLTSPLLYSTAVFA.

This sequence belongs to the LolA family. Monomer.

The protein resides in the periplasm. Functionally, participates in the translocation of lipoproteins from the inner membrane to the outer membrane. Only forms a complex with a lipoprotein if the residue after the N-terminal Cys is not an aspartate (The Asp acts as a targeting signal to indicate that the lipoprotein should stay in the inner membrane). The polypeptide is Outer-membrane lipoprotein carrier protein (Shewanella sp. (strain W3-18-1)).